We begin with the raw amino-acid sequence, 268 residues long: Small ribosomal subunit protein eS1 (268 aa).

It belongs to the eukaryotic ribosomal protein eS1 family. As to quaternary structure, component of the small ribosomal subunit. Mature ribosomes consist of a small (40S) and a large (60S) subunit. The 40S subunit contains about 33 different proteins and 1 molecule of RNA (18S). The 60S subunit contains about 49 different proteins and 3 molecules of RNA (28S, 5.8S and 5S).

Its subcellular location is the cytoplasm. This is Small ribosomal subunit protein eS1 from Artemia franciscana (Brine shrimp).